The chain runs to 958 residues: MAFRGPEPWVSASLLRQRLKAEEKTLDLEFEVLSVGFNEAGRYALRLSAENPLQVGSGAGVQLQVNDGDPFPACSAITDVIEQQEPGQSLTLTRSKFIFTLPKGFCKNDGQHDAQLHVEALRLDEPLGRAAQRVGEAIFPIYPRPDQPRMNPKAQDHEDLYRYCGNLALLRASTDPTARHCGSLAYSVAFHVHRGPQPPVSDSPPRAGQPELMSPEEPLIASQSTEPEIGHLSPSKKETIMVTLHGATNLPACKDGSEPWPYVVVKSTSEEKNNQSSKAVTSVTSEPTRAPIWGDTVNVEIQAEDAGQEDVILKVVDNRKKQELLSYKIPIKYLRVFHPYHFELVKPTESGKADEATAKTQLYATVVRKSSFIPRYIGCNHMALEIFLRGVNEPLANNPNPIVVIARVVPNYKEFKVSQANRDLASVGLPITPLSFPIPSMMNFDVPRVSQNGCPQLSKPGGPPEQPLWNQSFLFQGRDGATSFSEDTALVLEYYSSTSMKGSQPWTLNQPLGISVLPLKSRLYQKMLTGKGLDGLHVERLPIMDTSLKTINDEAPTVALSFQLLSSERPENFLTPNNSKALPTLDPKILDKKLRTIQESWSKDTVSSTMDLSTSTPREAEEEPLVPEMSHDTEMNNYRRAMQKMAEDILSLRRQASILEGENRILRSRLAQQEEEEGQGKASEAQNTVSMKQKLLLSELDMKKLRDRVQHLQNELIRKNDREKELLLLYQAQQPQAALLKQYQGKLQKMKALEETVRHQEKVIEKMERVLEDRLQDRSKPPPLNRQQGKPYTGFPMLSASGLPLGSMGENLPVELYSVLLAENAKLRTELDKNRHQQAPIILQQQALPDLLSGTSDKFNLLAKLEHAQSRILSLESQLEDSARRWGREKQDLATRLQEQEKGFRHPSNSIIIEQPSALTHSMDLKQPSELEPLLPSSDSKLNKPLSPQKETANSQQT.

Residues 214–353 (SPEEPLIASQ…LVKPTESGKA (140 aa)) form the C2 domain. Over residues 602-617 (SKDTVSSTMDLSTSTP) the composition is skewed to polar residues. The disordered stretch occupies residues 602–628 (SKDTVSSTMDLSTSTPREAEEEPLVPE). Coiled-coil stretches lie at residues 632-774 (DTEM…LEDR) and 859-899 (FNLL…RLQE). The tract at residues 899-958 (EQEKGFRHPSNSIIIEQPSALTHSMDLKQPSELEPLLPSSDSKLNKPLSPQKETANSQQT) is disordered. Polar residues-rich tracts occupy residues 907–920 (PSNSIIIEQPSALT) and 949–958 (QKETANSQQT).

The chain is Coiled-coil domain-containing protein 33 (CCDC33) from Homo sapiens (Human).